Reading from the N-terminus, the 93-residue chain is Integration host factor subunit beta (93 aa).

Belongs to the bacterial histone-like protein family. As to quaternary structure, heterodimer of an alpha and a beta chain.

In terms of biological role, this protein is one of the two subunits of integration host factor, a specific DNA-binding protein that functions in genetic recombination as well as in transcriptional and translational control. This chain is Integration host factor subunit beta, found in Aliivibrio salmonicida (strain LFI1238) (Vibrio salmonicida (strain LFI1238)).